The following is a 335-amino-acid chain: F420-dependent glucose-6-phosphate dehydrogenase (335 aa).

A coenzyme F420-(gamma-Glu)n-binding site is contributed by Asp-40. His-41 functions as the Proton donor in the catalytic mechanism. Residues Thr-77 and 108–109 each bind coenzyme F420-(gamma-Glu)n; that span reads TG. Glu-110 serves as the catalytic Proton acceptor. Coenzyme F420-(gamma-Glu)n contacts are provided by residues Asn-113, 177 to 178, and 180 to 181; these read GG and VV. Positions 195, 198, 259, and 283 each coordinate substrate.

It belongs to the F420-dependent glucose-6-phosphate dehydrogenase family. As to quaternary structure, homodimer.

The catalysed reaction is oxidized coenzyme F420-(gamma-L-Glu)(n) + D-glucose 6-phosphate + H(+) = 6-phospho-D-glucono-1,5-lactone + reduced coenzyme F420-(gamma-L-Glu)(n). In terms of biological role, catalyzes the coenzyme F420-dependent oxidation of glucose 6-phosphate (G6P) to 6-phosphogluconolactone. In Segniliparus rotundus (strain ATCC BAA-972 / CDC 1076 / CIP 108378 / DSM 44985 / JCM 13578), this protein is F420-dependent glucose-6-phosphate dehydrogenase.